A 459-amino-acid chain; its full sequence is Fibrous sheath-interacting protein 1 (459 aa).

The segment at 1–54 (MDITKGSLDEIARPASSSRSRPGSRVSTSLSTEKPKRSSTSLSLEILNPEPGFS) is disordered. Over residues 13–29 (RPASSSRSRPGSRVSTS) the composition is skewed to low complexity. Residues 162 to 202 (KMERAIKRMQALDDILQRKLAKEKEVKAQGLEIRIKLWEEL) are a coiled coil. Residues 252 to 289 (QLPNEDPVEDDDHKTLQGNMTGADSSDRSDCKTRHSKG) form a disordered region. Over residues 276–289 (SSDRSDCKTRHSKG) the composition is skewed to basic and acidic residues.

It belongs to the FSIP1 family.

The protein is Fibrous sheath-interacting protein 1 (fsip1) of Xenopus laevis (African clawed frog).